The sequence spans 173 residues: Nicotinamide-nucleotide adenylyltransferase (173 aa).

It belongs to the archaeal NMN adenylyltransferase family.

It is found in the cytoplasm. It carries out the reaction beta-nicotinamide D-ribonucleotide + ATP + H(+) = diphosphate + NAD(+). Its pathway is cofactor biosynthesis; NAD(+) biosynthesis; NAD(+) from nicotinamide D-ribonucleotide: step 1/1. The polypeptide is Nicotinamide-nucleotide adenylyltransferase (Methanosarcina mazei (strain ATCC BAA-159 / DSM 3647 / Goe1 / Go1 / JCM 11833 / OCM 88) (Methanosarcina frisia)).